We begin with the raw amino-acid sequence, 174 residues long: UPF0316 protein lin1888 (174 aa).

Helical transmembrane passes span 4-24, 36-56, and 62-82; these read GIFI…IYTV, LAAL…SLVL, and IANV…GMKI.

Belongs to the UPF0316 family.

It is found in the cell membrane. The chain is UPF0316 protein lin1888 from Listeria innocua serovar 6a (strain ATCC BAA-680 / CLIP 11262).